Here is a 493-residue protein sequence, read N- to C-terminus: Ribulose bisphosphate carboxylase large chain (493 aa).

N132 and T182 together coordinate substrate. Catalysis depends on K184, which acts as the Proton acceptor. Position 186 (K186) interacts with substrate. The Mg(2+) site is built by K210, D212, and E213. Position 210 is an N6-carboxylysine (K210). Residue H302 is the Proton acceptor of the active site. Residues R303, H335, and S387 each contribute to the substrate site.

The protein belongs to the RuBisCO large chain family. Type I subfamily. In terms of assembly, heterohexadecamer of 8 large chains and 8 small chains. It depends on Mg(2+) as a cofactor.

The catalysed reaction is 2 (2R)-3-phosphoglycerate + 2 H(+) = D-ribulose 1,5-bisphosphate + CO2 + H2O. The enzyme catalyses D-ribulose 1,5-bisphosphate + O2 = 2-phosphoglycolate + (2R)-3-phosphoglycerate + 2 H(+). In terms of biological role, ruBisCO catalyzes two reactions: the carboxylation of D-ribulose 1,5-bisphosphate, the primary event in carbon dioxide fixation, as well as the oxidative fragmentation of the pentose substrate. Both reactions occur simultaneously and in competition at the same active site. The chain is Ribulose bisphosphate carboxylase large chain from Acidiphilium cryptum (strain JF-5).